A 357-amino-acid polypeptide reads, in one-letter code: DNA replication and repair protein RecF (357 aa).

30–37 is a binding site for ATP; the sequence is GANGSGKT.

This sequence belongs to the RecF family.

The protein resides in the cytoplasm. Its function is as follows. The RecF protein is involved in DNA metabolism; it is required for DNA replication and normal SOS inducibility. RecF binds preferentially to single-stranded, linear DNA. It also seems to bind ATP. The protein is DNA replication and repair protein RecF of Cronobacter sakazakii (strain ATCC BAA-894) (Enterobacter sakazakii).